The chain runs to 276 residues: 4-chlorobenzoyl coenzyme A dehalogenase-1 (276 aa).

66 to 71 (AGFDLE) is a binding site for substrate. The active-site Proton acceptor is the H93. Residue G117 participates in substrate binding. The active-site Nucleophile is D148. R261 contributes to the substrate binding site.

It belongs to the enoyl-CoA hydratase/isomerase family. In terms of assembly, homotetramer.

It carries out the reaction 4-chlorobenzoyl-CoA + H2O = 4-hydroxybenzoyl-CoA + chloride + H(+). It participates in xenobiotic degradation; 4-chlorobenzoate degradation; 4-hydroxybenzoate from 4-chlorobenzoate: step 2/3. Dehalogenates 4-chlorobenzoyl-CoA, 4-iodobenzoyl-CoA, 4-bromobenzoyl-CoA and, at a slower rate, 4-fluorobenzoyl-CoA. Does not dehalogenate 2-chlorobenzoyl-CoA or 3-chlorobenzoyl-CoA. This Arthrobacter sp protein is 4-chlorobenzoyl coenzyme A dehalogenase-1.